A 975-amino-acid polypeptide reads, in one-letter code: C-1-tetrahydrofolate synthase, mitochondrial (975 aa).

Residues 1–34 constitute a mitochondrion transit peptide; sequence MLSRLSLLSNSRAFQQARWRIYRLKVSPTVHASQ. The segment at 35–343 is methylenetetrahydrofolate dehydrogenase and cyclohydrolase; the sequence is YHILSGRKLA…KPLPLHLESP (309 aa). Substrate is bound by residues 83 to 87 and 130 to 132; these read YVRMK and IQL. Residues 201-203 and Ser-226 each bind NADP(+); that span reads GRS. 301-305 serves as a coordination point for substrate; it reads PGGVG. Positions 344–975 are formyltetrahydrofolate synthetase; the sequence is VPSDIDISRA…DDDGEIEGLF (632 aa). Residue 408-415 coordinates ATP; the sequence is TPLGEGKS.

It in the N-terminal section; belongs to the tetrahydrofolate dehydrogenase/cyclohydrolase family. In the C-terminal section; belongs to the formate--tetrahydrofolate ligase family. As to quaternary structure, homodimer.

The protein resides in the mitochondrion. It catalyses the reaction (6R)-5,10-methylene-5,6,7,8-tetrahydrofolate + NADP(+) = (6R)-5,10-methenyltetrahydrofolate + NADPH. The catalysed reaction is (6R)-5,10-methenyltetrahydrofolate + H2O = (6R)-10-formyltetrahydrofolate + H(+). The enzyme catalyses (6S)-5,6,7,8-tetrahydrofolate + formate + ATP = (6R)-10-formyltetrahydrofolate + ADP + phosphate. The protein operates within one-carbon metabolism; tetrahydrofolate interconversion. Its function is as follows. Mitochondrial isozyme of C-1-tetrahydrofolate synthase. The trifunctional enzyme catalyzes the interconversion of the one-carbon derivatives of tetrahydrofolate (THF) between different oxidation states by the enzymatic activities 10-formyltetrahydrofolate synthetase, 5,lO-methenyltetrahydrofolate cyclohydrolase, and 5,lO-methylenetetrahydrofolate dehydrogenase. In Saccharomyces cerevisiae (strain ATCC 204508 / S288c) (Baker's yeast), this protein is C-1-tetrahydrofolate synthase, mitochondrial.